The following is a 612-amino-acid chain: Dihydroxy-acid dehydratase (612 aa).

Residue D81 participates in Mg(2+) binding. C122 provides a ligand contact to [2Fe-2S] cluster. 2 residues coordinate Mg(2+): D123 and K124. K124 is modified (N6-carboxylysine). C193 contributes to the [2Fe-2S] cluster binding site. E489 contributes to the Mg(2+) binding site. S515 acts as the Proton acceptor in catalysis.

Belongs to the IlvD/Edd family. Homodimer. It depends on [2Fe-2S] cluster as a cofactor. Mg(2+) serves as cofactor.

The enzyme catalyses (2R)-2,3-dihydroxy-3-methylbutanoate = 3-methyl-2-oxobutanoate + H2O. The catalysed reaction is (2R,3R)-2,3-dihydroxy-3-methylpentanoate = (S)-3-methyl-2-oxopentanoate + H2O. Its pathway is amino-acid biosynthesis; L-isoleucine biosynthesis; L-isoleucine from 2-oxobutanoate: step 3/4. It functions in the pathway amino-acid biosynthesis; L-valine biosynthesis; L-valine from pyruvate: step 3/4. Functions in the biosynthesis of branched-chain amino acids. Catalyzes the dehydration of (2R,3R)-2,3-dihydroxy-3-methylpentanoate (2,3-dihydroxy-3-methylvalerate) into 2-oxo-3-methylpentanoate (2-oxo-3-methylvalerate) and of (2R)-2,3-dihydroxy-3-methylbutanoate (2,3-dihydroxyisovalerate) into 2-oxo-3-methylbutanoate (2-oxoisovalerate), the penultimate precursor to L-isoleucine and L-valine, respectively. This Stutzerimonas stutzeri (strain A1501) (Pseudomonas stutzeri) protein is Dihydroxy-acid dehydratase.